Consider the following 59-residue polypeptide: Crassipeptide cce9a (59 aa).

A propeptide spanning residues 1–30 (ADNHARVAGPRAVASGRYATEKAFLQMMTR) is cleaved from the precursor.

In terms of processing, contains 3 disulfide bonds. As to expression, expressed by the venom duct.

The protein resides in the secreted. Functionally, crassispirid snail peptide that induces sleep-like symptoms in young mice (12 and 14 days) and hyperactivity in older mice (16 days), when intracranially injected. In Crassispira cerithina (Sea snail), this protein is Crassipeptide cce9a.